The primary structure comprises 184 residues: UPF0316 protein BLi00691/BL01474 (184 aa).

3 consecutive transmembrane segments (helical) span residues 9–29 (GVIMVGIILVINIIYVTFLTL), 41–61 (LAAFIGTIEMLVYVVGLGLVL), and 67–87 (IQNVIAYAVGFGIGIIVGTKI).

The protein belongs to the UPF0316 family.

The protein localises to the cell membrane. The sequence is that of UPF0316 protein BLi00691/BL01474 from Bacillus licheniformis (strain ATCC 14580 / DSM 13 / JCM 2505 / CCUG 7422 / NBRC 12200 / NCIMB 9375 / NCTC 10341 / NRRL NRS-1264 / Gibson 46).